The chain runs to 472 residues: Selenium-binding protein 2 (472 aa).

Ser467 is subject to Phosphoserine.

The protein belongs to the selenium-binding protein family. The N-terminus is blocked. As to expression, mainly expressed in liver.

Its subcellular location is the nucleus. The protein localises to the cytoplasm. It is found in the cytosol. It localises to the membrane. Functionally, selenium- and acetaminophen-binding protein which may be involved in the sensing of reactive xenobiotics in the cytoplasm. May be involved in intra-Golgi protein transport. This chain is Selenium-binding protein 2 (Selenbp2), found in Mus musculus (Mouse).